The chain runs to 91 residues: UPF0250 protein NMC1112 (91 aa).

The protein belongs to the UPF0250 family.

This chain is UPF0250 protein NMC1112, found in Neisseria meningitidis serogroup C / serotype 2a (strain ATCC 700532 / DSM 15464 / FAM18).